Reading from the N-terminus, the 285-residue chain is Diaminopimelate epimerase 2 (285 aa).

Residues Asn-11, Asn-63, 73-74, Asn-158, Asn-191, 209-210, and 219-220 each bind substrate; these read GN, ER, and GS.

Belongs to the diaminopimelate epimerase family. Homodimer.

Its subcellular location is the cytoplasm. It catalyses the reaction (2S,6S)-2,6-diaminopimelate = meso-2,6-diaminopimelate. The protein operates within amino-acid biosynthesis; L-lysine biosynthesis via DAP pathway; DL-2,6-diaminopimelate from LL-2,6-diaminopimelate: step 1/1. In terms of biological role, catalyzes the stereoinversion of LL-2,6-diaminopimelate (L,L-DAP) to meso-diaminopimelate (meso-DAP), a precursor of L-lysine and an essential component of the bacterial peptidoglycan. The sequence is that of Diaminopimelate epimerase 2 from Nostoc sp. (strain PCC 7120 / SAG 25.82 / UTEX 2576).